A 288-amino-acid polypeptide reads, in one-letter code: Mortality factor 4-like protein 2 (288 aa).

A compositionally biased stretch (polar residues) spans 1-15 (MSSRKQASQTRGQQS). The tract at residues 1–115 (MSSRKQASQT…DPTVESEEAF (115 aa)) is disordered. S71 is modified (phosphoserine). One can recognise an MRG domain in the interval 117 to 288 (SRMEVKVKIP…ASADYHRKAL (172 aa)).

In terms of assembly, component of the NuA4 histone acetyltransferase complex which contains the catalytic subunit KAT5/TIP60 and the subunits EP400, TRRAP/PAF400, BRD8/SMAP, EPC1, DMAP1/DNMAP1, RUVBL1/TIP49, RUVBL2, ING3, actin, ACTL6A/BAF53A, MORF4L1/MRG15, MORF4L2/MRGX, MRGBP, YEATS4/GAS41 and VPS72/YL1. The NuA4 complex interacts with MYC and the adenovirus E1A protein. MORF4L1 may also participate in the formation of NuA4 related complexes which lack the KAT5/TIP60 catalytic subunit, but which include the SWI/SNF related protein SRCAP. Component of the MSIN3A histone deacetylase complex, which includes SIN3A, HDAC2, ARID4B, MORF4L1, RBBP4/RbAp48, and RBBP7/RbAp46. Interacts with MRFAP1 and RB1. May also interact with one or more as yet undefined members of the TLE (transducin-like enhancer of split) family of transcriptional repressors.

It is found in the nucleus. Functionally, component of the NuA4 histone acetyltransferase complex which is involved in transcriptional activation of select genes principally by acetylation of nucleosomal histone H4 and H2A. This modification may both alter nucleosome - DNA interactions and promote interaction of the modified histones with other proteins which positively regulate transcription. This complex may be required for the activation of transcriptional programs associated with oncogene and proto-oncogene mediated growth induction, tumor suppressor mediated growth arrest and replicative senescence, apoptosis, and DNA repair. The NuA4 complex ATPase and helicase activities seem to be, at least in part, contributed by the association of RUVBL1 and RUVBL2 with EP400. NuA4 may also play a direct role in DNA repair when directly recruited to sites of DNA damage. Also a component of the MSIN3A complex which acts to repress transcription by deacetylation of nucleosomal histones. This chain is Mortality factor 4-like protein 2 (Morf4l2), found in Mus musculus (Mouse).